Consider the following 176-residue polypeptide: Probable DNA-directed RNA polymerase subunit delta (176 aa).

The region spanning 14–81 (LSLIDVAHFI…GNNMWGLRAW (68 aa)) is the HTH HARE-type domain. Disordered regions lie at residues 91-119 (VQTQ…VDYD) and 140-176 (DEDE…PEDK). 2 stretches are compositionally biased toward acidic residues: residues 105 to 119 (DDDD…VDYD) and 159 to 176 (TVED…PEDK).

Belongs to the RpoE family. RNAP is composed of a core of 2 alpha, a beta and a beta' subunits. The core is associated with a delta subunit and one of several sigma factors.

Participates in both the initiation and recycling phases of transcription. In the presence of the delta subunit, RNAP displays an increased specificity of transcription, a decreased affinity for nucleic acids, and an increased efficiency of RNA synthesis because of enhanced recycling. The polypeptide is Probable DNA-directed RNA polymerase subunit delta (Listeria welshimeri serovar 6b (strain ATCC 35897 / DSM 20650 / CCUG 15529 / CIP 8149 / NCTC 11857 / SLCC 5334 / V8)).